We begin with the raw amino-acid sequence, 465 residues long: Casein kinase 1-like protein 2 (465 aa).

A Protein kinase domain is found at 9–277 (FRLGRKIGGG…LKRLFRDLFI (269 aa)). Residues 15–23 (IGGGSFGEI) and K38 contribute to the ATP site. Catalysis depends on D128, which acts as the Proton acceptor. Disordered stretches follow at residues 300–344 (STPP…GIPR) and 396–428 (REAA…VSRN). Polar residues predominate over residues 405–428 (SEPSNPQIVEAGSGSNSKIPVSRN).

It belongs to the protein kinase superfamily. CK1 Ser/Thr protein kinase family. Casein kinase I subfamily. As to quaternary structure, monomer. In terms of processing, autophosphorylated.

Its subcellular location is the cytoplasm. The protein localises to the nucleus. The catalysed reaction is L-seryl-[protein] + ATP = O-phospho-L-seryl-[protein] + ADP + H(+). The enzyme catalyses L-threonyl-[protein] + ATP = O-phospho-L-threonyl-[protein] + ADP + H(+). Casein kinases are operationally defined by their preferential utilization of acidic proteins such as caseins as substrates. It can phosphorylate a large number of proteins. The chain is Casein kinase 1-like protein 2 from Arabidopsis thaliana (Mouse-ear cress).